Consider the following 211-residue polypeptide: Superoxide dismutase [Mn] (211 aa).

Residues histidine 27, histidine 82, aspartate 165, and histidine 169 each contribute to the Mn(2+) site.

This sequence belongs to the iron/manganese superoxide dismutase family. Homodimer. Mn(2+) serves as cofactor.

It carries out the reaction 2 superoxide + 2 H(+) = H2O2 + O2. Destroys superoxide anion radicals which are normally produced within the cells and which are toxic to biological systems. In Bordetella pertussis (strain Tohama I / ATCC BAA-589 / NCTC 13251), this protein is Superoxide dismutase [Mn] (sodA).